A 284-amino-acid chain; its full sequence is Acetylglutamate kinase (284 aa).

Substrate contacts are provided by residues 66–67 (GG), arginine 88, and asparagine 179.

The protein belongs to the acetylglutamate kinase family. ArgB subfamily.

It localises to the cytoplasm. The enzyme catalyses N-acetyl-L-glutamate + ATP = N-acetyl-L-glutamyl 5-phosphate + ADP. Its pathway is amino-acid biosynthesis; L-arginine biosynthesis; N(2)-acetyl-L-ornithine from L-glutamate: step 2/4. In terms of biological role, catalyzes the ATP-dependent phosphorylation of N-acetyl-L-glutamate. The protein is Acetylglutamate kinase of Actinobacillus pleuropneumoniae serotype 5b (strain L20).